The chain runs to 330 residues: Anthranilate phosphoribosyltransferase (330 aa).

5-phospho-alpha-D-ribose 1-diphosphate-binding positions include G77, 80–81 (GD), T85, 87–90 (NIST), 105–113 (KHGNKAVSS), and S117. Anthranilate is bound at residue G77. Residue S89 coordinates Mg(2+). Residue N108 participates in anthranilate binding. Anthranilate is bound at residue R163. Positions 222 and 223 each coordinate Mg(2+).

This sequence belongs to the anthranilate phosphoribosyltransferase family. As to quaternary structure, homodimer. The cofactor is Mg(2+).

The catalysed reaction is N-(5-phospho-beta-D-ribosyl)anthranilate + diphosphate = 5-phospho-alpha-D-ribose 1-diphosphate + anthranilate. Its pathway is amino-acid biosynthesis; L-tryptophan biosynthesis; L-tryptophan from chorismate: step 2/5. Catalyzes the transfer of the phosphoribosyl group of 5-phosphorylribose-1-pyrophosphate (PRPP) to anthranilate to yield N-(5'-phosphoribosyl)-anthranilate (PRA). The polypeptide is Anthranilate phosphoribosyltransferase (Pelagibacter ubique (strain HTCC1062)).